The primary structure comprises 429 residues: MANVVVVGTQWGDEGKGKIVDWLSERADIIVRYQGGHNAGHTLVVNGVNYKLSLLPSGLVRGKLSIIGNGVVVDPHHFVVELKKLRDQGVKIVPEILRIAENAPLILSLHRDLDAIRESGFSGLKIGTTKRGIGPAYEDKVGRRAIRVMDLAEANTLMAKIKRLLRHHNALRRGMGVAEIDSQALYDELMQVADEILPFMDCTWRLLDESYRMGKHVLFEGAQGALLDNDFGTYPYVTSSNTVAGQACTGSGMGPGAIHYVLGIAKAYTTRVGEGPFPTEQINDIGEFLGIRGHEFGVVTGRKRRCGWFDAVLVRQMVTICGVQGIALTKLDVLDGLDEIKVCVGYELDGKRIDYLPSSMGAQSRVKPIYETLEGWKQATAHALKWEDLPVQAIKYIRYIEELIGTQVALLSTSPEREDTILITDPFAN.

Residues 12 to 18 and 40 to 42 each bind GTP; these read GDEGKGK and GHT. D13 acts as the Proton acceptor in catalysis. D13 and G40 together coordinate Mg(2+). IMP is bound by residues 13–16, 38–41, T129, R143, Q223, T238, and R302; these read DEGK and NAGH. H41 functions as the Proton donor in the catalytic mechanism. 298–304 serves as a coordination point for substrate; the sequence is VVTGRKR. Residues R304, 330–332, and 412–414 contribute to the GTP site; these read KLD and STS.

Belongs to the adenylosuccinate synthetase family. As to quaternary structure, homodimer. It depends on Mg(2+) as a cofactor.

It localises to the cytoplasm. It carries out the reaction IMP + L-aspartate + GTP = N(6)-(1,2-dicarboxyethyl)-AMP + GDP + phosphate + 2 H(+). It participates in purine metabolism; AMP biosynthesis via de novo pathway; AMP from IMP: step 1/2. Its function is as follows. Plays an important role in the de novo pathway of purine nucleotide biosynthesis. Catalyzes the first committed step in the biosynthesis of AMP from IMP. The chain is Adenylosuccinate synthetase from Bartonella henselae (strain ATCC 49882 / DSM 28221 / CCUG 30454 / Houston 1) (Rochalimaea henselae).